The chain runs to 225 residues: Ribonuclease 3 (225 aa).

Positions 5–127 (IDKLERKLGY…IIGAIYLDSD (123 aa)) constitute an RNase III domain. Glu-40 is a binding site for Mg(2+). The active site involves Asp-44. Mg(2+) contacts are provided by Asp-113 and Glu-116. Residue Glu-116 is part of the active site. A DRBM domain is found at 154–224 (DPKTRLQEFL…AETALEQLTN (71 aa)). Positions 204-225 (GTSRRKAEQAAAETALEQLTNG) are disordered. The segment covering 212 to 225 (QAAAETALEQLTNG) has biased composition (low complexity).

It belongs to the ribonuclease III family. As to quaternary structure, homodimer. Requires Mg(2+) as cofactor.

It localises to the cytoplasm. The catalysed reaction is Endonucleolytic cleavage to 5'-phosphomonoester.. In terms of biological role, digests double-stranded RNA. Involved in the processing of primary rRNA transcript to yield the immediate precursors to the large and small rRNAs (23S and 16S). Processes some mRNAs, and tRNAs when they are encoded in the rRNA operon. Processes pre-crRNA and tracrRNA of type II CRISPR loci if present in the organism. The chain is Ribonuclease 3 from Vibrio parahaemolyticus serotype O3:K6 (strain RIMD 2210633).